Here is a 36-residue protein sequence, read N- to C-terminus: MIIGMLRAHMITSLSPIPTMPSVNINKPKARFLYAI.

The sequence is that of Protein YibY from Escherichia coli (strain K12).